We begin with the raw amino-acid sequence, 152 residues long: MLP-like protein 165 (152 aa).

Belongs to the MLP family.

This chain is MLP-like protein 165 (MLP165), found in Arabidopsis thaliana (Mouse-ear cress).